The chain runs to 287 residues: Bifunctional protein FolD (287 aa).

NADP(+) is bound by residues 160–162, Ser-189, and Thr-230; that span reads GRS.

This sequence belongs to the tetrahydrofolate dehydrogenase/cyclohydrolase family. In terms of assembly, homodimer.

The enzyme catalyses (6R)-5,10-methylene-5,6,7,8-tetrahydrofolate + NADP(+) = (6R)-5,10-methenyltetrahydrofolate + NADPH. It carries out the reaction (6R)-5,10-methenyltetrahydrofolate + H2O = (6R)-10-formyltetrahydrofolate + H(+). Its pathway is one-carbon metabolism; tetrahydrofolate interconversion. Its function is as follows. Catalyzes the oxidation of 5,10-methylenetetrahydrofolate to 5,10-methenyltetrahydrofolate and then the hydrolysis of 5,10-methenyltetrahydrofolate to 10-formyltetrahydrofolate. The sequence is that of Bifunctional protein FolD from Chlamydia abortus (strain DSM 27085 / S26/3) (Chlamydophila abortus).